The chain runs to 1023 residues: Peroxisome proliferator-activated receptor gamma coactivator 1-beta (1023 aa).

The interval M1–A91 is abolishes DNA transcriptional activity when missing. The disordered stretch occupies residues L122–P148. Pro residues predominate over residues S132–P146. An LXXLL motif 1 motif is present at residues L156 to L160. Disordered stretches follow at residues Y165 to S210, L237 to P278, and R302 to H331. The short motif at L343–L347 is the LXXLL motif 2 element. Disordered regions lie at residues L369–T463, R520–P567, T601–D623, and L636–R683. Residue S384 is modified to Phosphoserine. Residues L412 to R422 show a composition bias toward basic and acidic residues. Positions Q429–E450 are enriched in acidic residues. S524 is subject to Phosphoserine. The span at P614–D623 shows a compositional bias: basic and acidic residues. S638 carries the phosphoserine modification. The short motif at D691 to Y694 is the HCFC1-binding-motif (HBM) element. Disordered regions lie at residues V717 to H758 and D779 to A867. Residues E793–L805 are compositionally biased toward low complexity. Residues P806–S825 show a composition bias toward acidic residues. Positions C849 to P866 are enriched in low complexity. The RRM domain occupies R902 to Y976.

In terms of assembly, interacts with hepatocyte nuclear factor 4-alpha/HNF4A, Sterol regulatory binding transcription factor 1/SREBF1, PPAR-alpha/PPARA, thyroid hormone receptor beta/THRB and host cell factor/HCFC1. Interacts with estrogen-related receptor gamma/ESRRG and alpha/ESRRA. Interacts with PRDM16. Interacts with estrogen receptor alpha/ESR1. As to expression, ubiquitous with higher expression in heart, brain and skeletal muscle.

It is found in the nucleus. Plays a role of stimulator of transcription factors and nuclear receptors activities. Activates transcriptional activity of estrogen receptor alpha, nuclear respiratory factor 1 (NRF1) and glucocorticoid receptor in the presence of glucocorticoids. May play a role in constitutive non-adrenergic-mediated mitochondrial biogenesis as suggested by increased basal oxygen consumption and mitochondrial number when overexpressed. May be involved in fat oxidation and non-oxidative glucose metabolism and in the regulation of energy expenditure. Induces the expression of PERM1 in the skeletal muscle in an ESRRA-dependent manner. In Homo sapiens (Human), this protein is Peroxisome proliferator-activated receptor gamma coactivator 1-beta (PPARGC1B).